A 903-amino-acid chain; its full sequence is Alanine--tRNA ligase (903 aa).

4 residues coordinate Zn(2+): histidine 581, histidine 585, cysteine 693, and histidine 697.

This sequence belongs to the class-II aminoacyl-tRNA synthetase family. Zn(2+) serves as cofactor.

It localises to the cytoplasm. It catalyses the reaction tRNA(Ala) + L-alanine + ATP = L-alanyl-tRNA(Ala) + AMP + diphosphate. In terms of biological role, catalyzes the attachment of alanine to tRNA(Ala) in a two-step reaction: alanine is first activated by ATP to form Ala-AMP and then transferred to the acceptor end of tRNA(Ala). Also edits incorrectly charged Ser-tRNA(Ala) and Gly-tRNA(Ala) via its editing domain. The sequence is that of Alanine--tRNA ligase from Psychrobacter sp. (strain PRwf-1).